A 929-amino-acid polypeptide reads, in one-letter code: Bifunctional uridylyltransferase/uridylyl-removing enzyme (929 aa).

Positions methionine 1–proline 379 are uridylyltransferase. The interval glutamate 380–threonine 735 is uridylyl-removing. An HD domain is found at valine 495–leucine 618. ACT domains lie at glutamate 736–arginine 818 and valine 849–alanine 929.

This sequence belongs to the GlnD family. Mg(2+) is required as a cofactor.

It catalyses the reaction [protein-PII]-L-tyrosine + UTP = [protein-PII]-uridylyl-L-tyrosine + diphosphate. The enzyme catalyses [protein-PII]-uridylyl-L-tyrosine + H2O = [protein-PII]-L-tyrosine + UMP + H(+). Its activity is regulated as follows. Uridylyltransferase (UTase) activity is inhibited by glutamine, while glutamine activates uridylyl-removing (UR) activity. Modifies, by uridylylation and deuridylylation, the PII regulatory proteins (GlnB and homologs), in response to the nitrogen status of the cell that GlnD senses through the glutamine level. Under low glutamine levels, catalyzes the conversion of the PII proteins and UTP to PII-UMP and PPi, while under higher glutamine levels, GlnD hydrolyzes PII-UMP to PII and UMP (deuridylylation). Thus, controls uridylylation state and activity of the PII proteins, and plays an important role in the regulation of nitrogen fixation and metabolism. This is Bifunctional uridylyltransferase/uridylyl-removing enzyme from Rhodopseudomonas palustris (strain ATCC BAA-98 / CGA009).